A 128-amino-acid chain; its full sequence is Small ribosomal subunit protein uS9 (128 aa).

Belongs to the universal ribosomal protein uS9 family.

This Christiangramia forsetii (strain DSM 17595 / CGMCC 1.15422 / KT0803) (Gramella forsetii) protein is Small ribosomal subunit protein uS9.